The chain runs to 108 residues: Protein phosphatase 1 regulatory subunit 1C (108 aa).

The segment at Ala25–His108 is disordered. Residues Asn45–Val54 show a composition bias toward basic and acidic residues. Residues Thr55–Tyr73 show a composition bias toward polar residues. Positions Ala99–His108 are enriched in basic and acidic residues.

This sequence belongs to the protein phosphatase inhibitor 1 family.

It is found in the cytoplasm. May increase cell susceptibility to TNF-induced apoptosis. This Mus musculus (Mouse) protein is Protein phosphatase 1 regulatory subunit 1C (Ppp1r1c).